A 314-amino-acid polypeptide reads, in one-letter code: GTPase Era (314 aa).

In terms of domain architecture, Era-type G spans 21–189; sequence KSGFVGIIGR…QNTLIEQLEP (169 aa). A G1 region spans residues 29–36; it reads GRPNVGKS. 29-36 is a binding site for GTP; sequence GRPNVGKS. A G2 region spans residues 55–59; the sequence is QTTRN. A G3 region spans residues 76–79; it reads DTPG. GTP is bound by residues 76-80 and 138-141; these read DTPGI and NKSD. The segment at 138–141 is G4; that stretch reads NKSD. Residues 168-170 are G5; the sequence is FSA. Residues 212-296 form the KH type-2 domain; the sequence is IREQILQLTR…FLKLFVKVEP (85 aa).

Belongs to the TRAFAC class TrmE-Era-EngA-EngB-Septin-like GTPase superfamily. Era GTPase family. Monomer.

It localises to the cytoplasm. It is found in the cell inner membrane. In terms of biological role, an essential GTPase that binds both GDP and GTP, with rapid nucleotide exchange. Plays a role in 16S rRNA processing and 30S ribosomal subunit biogenesis and possibly also in cell cycle regulation and energy metabolism. The sequence is that of GTPase Era from Crocosphaera subtropica (strain ATCC 51142 / BH68) (Cyanothece sp. (strain ATCC 51142)).